The primary structure comprises 178 residues: UPF0302 protein Bcer98_1244 (178 aa).

Belongs to the UPF0302 family.

This is UPF0302 protein Bcer98_1244 from Bacillus cytotoxicus (strain DSM 22905 / CIP 110041 / 391-98 / NVH 391-98).